We begin with the raw amino-acid sequence, 128 residues long: Early 4 ORF1 protein (128 aa).

Over 1–26 (MAAAVEALYVVLEREGAILPRQEGFS) the chain is Cytoplasmic. Residues 27 to 47 (GVYVFFSPINFVIPPMGAVML) form a helical membrane-spanning segment. Over 48 to 99 (SLRLRVCIPPGYFGRFLALTDVNQPDVFTESYIMTPDMTEELSVVLFNHGDQ) the chain is Extracellular. The helical transmembrane segment at 100–120 (FFYGHAGMAVVRLMLIRVVFP) threads the bilayer. Residues 121-128 (VVRQASNV) are Cytoplasmic-facing. The short motif at 125–128 (ASNV) is the PBZ domain binding motif element.

This sequence belongs to the adenoviridae E4-ORF1 family. As to quaternary structure, may interact with host PDZ proteins through the PDZ domain binding motif (PBM), namely host DLG1, PATJ and TJP2.

It localises to the host membrane. In terms of biological role, may modulate tight-junctions functions of infected cells through interactions with PDZ proteins. E4 ORF1 has ben show for Adenovirus 9 to interact with protein involved in tight junction regulation. May play a role in mTOR activation by activating PI3-kinase, thus overriding cellular checkpoint for translation. This Human adenovirus C serotype 2 (HAdV-2) protein is Early 4 ORF1 protein.